The following is a 375-amino-acid chain: o-succinylbenzoate synthase (375 aa).

Catalysis depends on Lys166, which acts as the Proton donor. Mg(2+)-binding residues include Asp191, Glu216, and Asp241. Lys265 acts as the Proton acceptor in catalysis.

This sequence belongs to the mandelate racemase/muconate lactonizing enzyme family. MenC type 2 subfamily. Homotetramer. Requires a divalent metal cation as cofactor.

The catalysed reaction is (1R,6R)-6-hydroxy-2-succinyl-cyclohexa-2,4-diene-1-carboxylate = 2-succinylbenzoate + H2O. It catalyses the reaction N-acetyl-D-methionine = N-acetyl-L-methionine. The enzyme catalyses N-acetyl-D-phenylalanine = N-acetyl-L-phenylalanine. Its pathway is quinol/quinone metabolism; 1,4-dihydroxy-2-naphthoate biosynthesis; 1,4-dihydroxy-2-naphthoate from chorismate: step 4/7. It participates in quinol/quinone metabolism; menaquinone biosynthesis. Its function is as follows. Converts 2-succinyl-6-hydroxy-2,4-cyclohexadiene-1-carboxylate (SHCHC) to 2-succinylbenzoate (OSB). Also acts as a N-succinylamino acid racemase (NSAR) that catalyzes the racemization of various N-succinylamino acids, including N-succinyl-alanine and N-succinyl-phenylalanine. Can catalyze the racemization of a broad range of N-acylamino acids, including N-acetyl-methionine, N-acetyl-phenylalanine, N-carbamoyl-methionine, N-formyl-D-methionine, N-formyl-D-norleucine and N-carbamoyl-D-norleucine. May be a bifunctional enzyme involved in menaquinone biosynthesis and in an irreversible pathway for the conversion of D- to L-amino acids, thereby facilitating the survival and/or growth of the organism. The chain is o-succinylbenzoate synthase from Geobacillus kaustophilus.